We begin with the raw amino-acid sequence, 688 residues long: Elongation factor G (688 aa).

Residues E8 to M282 enclose the tr-type G domain. Residues A17–T24, D81–H85, and N135–D138 each bind GTP.

The protein belongs to the TRAFAC class translation factor GTPase superfamily. Classic translation factor GTPase family. EF-G/EF-2 subfamily.

Its subcellular location is the cytoplasm. Functionally, catalyzes the GTP-dependent ribosomal translocation step during translation elongation. During this step, the ribosome changes from the pre-translocational (PRE) to the post-translocational (POST) state as the newly formed A-site-bound peptidyl-tRNA and P-site-bound deacylated tRNA move to the P and E sites, respectively. Catalyzes the coordinated movement of the two tRNA molecules, the mRNA and conformational changes in the ribosome. In Apple proliferation phytoplasma, this protein is Elongation factor G (fusA).